A 121-amino-acid chain; its full sequence is Large ribosomal subunit protein bL12 (121 aa).

It belongs to the bacterial ribosomal protein bL12 family. In terms of assembly, homodimer. Part of the ribosomal stalk of the 50S ribosomal subunit. Forms a multimeric L10(L12)X complex, where L10 forms an elongated spine to which 2 to 4 L12 dimers bind in a sequential fashion. Binds GTP-bound translation factors.

Functionally, forms part of the ribosomal stalk which helps the ribosome interact with GTP-bound translation factors. Is thus essential for accurate translation. This is Large ribosomal subunit protein bL12 from Bacillus pumilus (strain SAFR-032).